A 93-amino-acid chain; its full sequence is MMSKMGAMFVLLLLFTLASSQQEGDVQARKTHPKREFQRILLRSGRKCNFDKCKGTGVYNCGESCSCEGLHSCRCTYNIGSMKSGCACICTYY.

A signal peptide spans 1-20 (MMSKMGAMFVLLLLFTLASS). Positions 21-46 (QQEGDVQARKTHPKREFQRILLRSGR) are excised as a propeptide. 2 positions are modified to 4-carboxyglutamate: glutamate 63 and glutamate 68.

In terms of processing, contains 5 disulfide bonds. As to expression, expressed by the venom duct.

The protein localises to the secreted. Alpha-conotoxins act on postsynaptic membranes, they bind to the nicotinic acetylcholine receptors (nAChR) and thus inhibit them. This toxin provokes a nearly complete and slowly reversible inhibition of both the human adult (alpha-1-beta-1-epsilon-delta (CHRNA1-CHRNB1-CHRND-CHRNE)) and human fetal (alpha-1-beta-1-gamma-delta (CHRNA1-CHRNB1-CHRNG-CHRND)) neuromuscular nAChRs. It also reversibly blocks the neuromuscular alpha-7/CHRNA7 nAChR, the alpha-3-beta-2 (CHRNA3-CHRNB2) nAChR, the chimeric alpha-6 or -3/beta-3 or -2 (CHRNA6/CHRNA3-CHRNB2-CHRNB3) nAChR and with a low potency the alpha-4-beta-2 (CHRNA4-CHRNB2) nAChR. In addition, the toxin also inhibits the alpha-9-alpha-10 (CHRNA9-CHRNA10) nAChR with a high potency (IC(50)=187 nM). The polypeptide is Alpha-conotoxin RVIIIA (Conus radiatus (Rayed cone)).